Consider the following 1791-residue polypeptide: Protein TIC 214 (1791 aa).

A run of 6 helical transmembrane segments spans residues 19–39, 68–88, 91–111, 133–153, 176–196, and 230–250; these read IINS…FSIG, FIAG…HLAL, PHTI…WNNH, VFLN…SSML, VGWL…LVWI, and IFSI…PSPI. Positions 257 to 271 are enriched in basic and acidic residues; that stretch reads GTSETEERGGTKQDQ. Disordered stretches follow at residues 257 to 278 and 1498 to 1521; these read GTSE…TEEA and ADQG…PNQE.

This sequence belongs to the TIC214 family. In terms of assembly, part of the Tic complex.

The protein resides in the plastid. It localises to the chloroplast inner membrane. Its function is as follows. Involved in protein precursor import into chloroplasts. May be part of an intermediate translocation complex acting as a protein-conducting channel at the inner envelope. In Aethionema grandiflorum (Persian stone-cress), this protein is Protein TIC 214.